Consider the following 226-residue polypeptide: 3-dehydroquinate dehydratase (226 aa).

Residues 33–35 and Arg-65 contribute to the 3-dehydroquinate site; that span reads ELR. Catalysis depends on His-120, which acts as the Proton donor/acceptor. The Schiff-base intermediate with substrate role is filled by Lys-147. 3-dehydroquinate-binding residues include Arg-186, Ser-205, and Gln-209.

Belongs to the type-I 3-dehydroquinase family. Homodimer.

The enzyme catalyses 3-dehydroquinate = 3-dehydroshikimate + H2O. Its pathway is metabolic intermediate biosynthesis; chorismate biosynthesis; chorismate from D-erythrose 4-phosphate and phosphoenolpyruvate: step 3/7. Its function is as follows. Involved in the third step of the chorismate pathway, which leads to the biosynthesis of aromatic amino acids. Catalyzes the cis-dehydration of 3-dehydroquinate (DHQ) and introduces the first double bond of the aromatic ring to yield 3-dehydroshikimate. The chain is 3-dehydroquinate dehydratase from Thermodesulfovibrio yellowstonii (strain ATCC 51303 / DSM 11347 / YP87).